Here is a 192-residue protein sequence, read N- to C-terminus: Thymidine kinase (192 aa).

ATP contacts are provided by residues 9-16 and 85-88; these read GAMNSGKS and DEVQ. Glu86 acts as the Proton acceptor in catalysis. Positions 143, 146, 181, and 184 each coordinate Zn(2+).

This sequence belongs to the thymidine kinase family. In terms of assembly, homotetramer.

The protein localises to the cytoplasm. It carries out the reaction thymidine + ATP = dTMP + ADP + H(+). This chain is Thymidine kinase, found in Shouchella clausii (strain KSM-K16) (Alkalihalobacillus clausii).